The following is a 264-amino-acid chain: Small ribosomal subunit protein eS1 (264 aa).

At Lys34 the chain carries N6-acetyllysine; alternate. Residue Lys34 forms a Glycyl lysine isopeptide (Lys-Gly) (interchain with G-Cter in SUMO2); alternate linkage. Lys56 carries the N6-acetyllysine modification. The residue at position 155 (Tyr155) is an ADP-ribosyltyrosine. Positions 233-264 are disordered; it reads GEGGSSGKAAGDETGAKVERADGYEPPVQESV. The residue at position 237 (Ser237) is a Phosphoserine. The span at 242–255 shows a compositional bias: basic and acidic residues; the sequence is AGDETGAKVERADG. At Lys249 the chain carries N6-acetyllysine; alternate. A Glycyl lysine isopeptide (Lys-Gly) (interchain with G-Cter in SUMO2); alternate cross-link involves residue Lys249. Tyr256 bears the Phosphotyrosine mark. Phosphoserine is present on Ser263.

Belongs to the eukaryotic ribosomal protein eS1 family. Component of the small ribosomal subunit. Mature ribosomes consist of a small (40S) and a large (60S) subunit. The 40S subunit contains about 33 different proteins and 1 molecule of RNA (18S). The 60S subunit contains about 49 different proteins and 3 molecules of RNA (28S, 5.8S and 5S). Identified in a IGF2BP1-dependent mRNP granule complex containing untranslated mRNAs. Binds with high affinity to IPO4. Interacts with DDIT3. Part of the small subunit (SSU) processome, composed of more than 70 proteins and the RNA chaperone small nucleolar RNA (snoRNA) U3. Post-translationally, ADP-ribosylated at Tyr-155 by PARP1 in presence of HPF1.

The protein localises to the cytoplasm. Its subcellular location is the nucleus. The protein resides in the nucleolus. Component of the small ribosomal subunit. The ribosome is a large ribonucleoprotein complex responsible for the synthesis of proteins in the cell. Part of the small subunit (SSU) processome, first precursor of the small eukaryotic ribosomal subunit. During the assembly of the SSU processome in the nucleolus, many ribosome biogenesis factors, an RNA chaperone and ribosomal proteins associate with the nascent pre-rRNA and work in concert to generate RNA folding, modifications, rearrangements and cleavage as well as targeted degradation of pre-ribosomal RNA by the RNA exosome. May play a role during erythropoiesis through regulation of transcription factor DDIT3. This chain is Small ribosomal subunit protein eS1 (Rps3a), found in Mus musculus (Mouse).